The sequence spans 308 residues: Apolipoprotein F (308 aa).

It belongs to the apolipoprotein F family.

The protein resides in the secreted. Minor apolipoprotein that associates with LDL. Inhibits cholesteryl ester transfer protein (CETP) activity and appears to be an important regulator of cholesterol transport. Also associates to a lesser degree with VLDL, Apo-AI and Apo-AII. This Rattus norvegicus (Rat) protein is Apolipoprotein F (Apof).